A 629-amino-acid chain; its full sequence is tRNA uridine 5-carboxymethylaminomethyl modification enzyme MnmG (629 aa).

13 to 18 (GGGHAG) lines the FAD pocket. 273-287 (GPRYCPSIEDKVVRF) contacts NAD(+).

The protein belongs to the MnmG family. In terms of assembly, homodimer. Heterotetramer of two MnmE and two MnmG subunits. Requires FAD as cofactor.

It is found in the cytoplasm. NAD-binding protein involved in the addition of a carboxymethylaminomethyl (cmnm) group at the wobble position (U34) of certain tRNAs, forming tRNA-cmnm(5)s(2)U34. This is tRNA uridine 5-carboxymethylaminomethyl modification enzyme MnmG from Alkalilimnicola ehrlichii (strain ATCC BAA-1101 / DSM 17681 / MLHE-1).